We begin with the raw amino-acid sequence, 755 residues long: Tryptophan 2-monooxygenase (755 aa).

FMN contacts are provided by Ser247, Glu267, Lys275, and Arg295. Arg295 is a binding site for substrate.

The protein belongs to the tryptophan 2-monooxygenase family. The cofactor is FMN.

It carries out the reaction L-tryptophan + O2 = indole-3-acetamide + CO2 + H2O. It participates in plant hormone metabolism; auxin biosynthesis. The chain is Tryptophan 2-monooxygenase (iaaM) from Agrobacterium vitis (Rhizobium vitis).